Consider the following 596-residue polypeptide: Glomulin (596 aa).

An N-acetylalanine modification is found at A2. The tract at residues 2–555 (AVEELQSIIK…EEIPSMPPEM (554 aa)) is alpha-helical region with structural similarity to HEAT repeats. Positions 299-596 (IDQLPMVLSP…STSEENVGIK (298 aa)) are important for interaction with RBX1.

Interacts with FKBP4 and FKBP1A. Interacts with RBX1 (via RING domain). Identified in complexes that contain RBX1 plus one of the cullins CUL1, CUL2, CUL3, and CUL4A. Identified in a SCF complex composed of CUL1, RBX1, SKP1, FBXW7 and GLMN. Component of a SCF-like complex consisting of CUL7, RBX1, SKP1, FBXW8 and GLMN. Interacts with unphosphorylated MET and is released upon MET phosphorylation. Post-translationally, phosphorylated on tyrosine residues. In terms of tissue distribution, ubiquitous. Detected in embryonic vasculature and embryonic perichondrium, and in adult eye, brain, heart, testis, kidney, smooth muscle and skeletal muscle.

Its function is as follows. Regulatory component of cullin-RING-based SCF (SKP1-Cullin-F-box protein) E3 ubiquitin-protein ligase complexes. Inhibits E3 ubiquitin ligase activity by binding to the RING domain of RBX1 and inhibiting its interaction with the E2 ubiquitin-conjugating enzyme CDC34. Inhibits RBX1-mediated neddylation of CUL1. Required for normal stability and normal cellular levels of key components of SCF ubiquitin ligase complexes, including FBXW7, RBX1, CUL1, CUL2, CUL3, CUL4A, and thereby contributes to the regulation of CCNE1 and MYC levels. Essential for normal development of the vasculature. Contributes to the regulation of RPS6KB1 phosphorylation. This is Glomulin (Glmn) from Mus musculus (Mouse).